Consider the following 179-residue polypeptide: Protein GrpE (179 aa).

A compositionally biased stretch (basic and acidic residues) spans 1–14; the sequence is MSKKDKKEEIKEEV. The tract at residues 1-40 is disordered; sequence MSKKDKKEEIKEEVEATEPTTEESVEEVAEETSENKELQE. Over residues 15–32 the composition is skewed to acidic residues; sequence EATEPTTEESVEEVAEET.

Belongs to the GrpE family. As to quaternary structure, homodimer.

It is found in the cytoplasm. Participates actively in the response to hyperosmotic and heat shock by preventing the aggregation of stress-denatured proteins, in association with DnaK and GrpE. It is the nucleotide exchange factor for DnaK and may function as a thermosensor. Unfolded proteins bind initially to DnaJ; upon interaction with the DnaJ-bound protein, DnaK hydrolyzes its bound ATP, resulting in the formation of a stable complex. GrpE releases ADP from DnaK; ATP binding to DnaK triggers the release of the substrate protein, thus completing the reaction cycle. Several rounds of ATP-dependent interactions between DnaJ, DnaK and GrpE are required for fully efficient folding. This Streptococcus mutans serotype c (strain ATCC 700610 / UA159) protein is Protein GrpE.